The chain runs to 35 residues: Photosystem II reaction center protein M (35 aa).

A helical membrane pass occupies residues 7–27; the sequence is GFLASLLFVLVPSVFLIVLYI.

Belongs to the PsbM family. As to quaternary structure, PSII is composed of 1 copy each of membrane proteins PsbA, PsbB, PsbC, PsbD, PsbE, PsbF, PsbH, PsbI, PsbJ, PsbK, PsbL, PsbM, PsbT, PsbX, PsbY, PsbZ, Psb30/Ycf12, peripheral proteins PsbO, CyanoQ (PsbQ), PsbU, PsbV and a large number of cofactors. It forms dimeric complexes.

The protein resides in the cellular thylakoid membrane. Its function is as follows. One of the components of the core complex of photosystem II (PSII). PSII is a light-driven water:plastoquinone oxidoreductase that uses light energy to abstract electrons from H(2)O, generating O(2) and a proton gradient subsequently used for ATP formation. It consists of a core antenna complex that captures photons, and an electron transfer chain that converts photonic excitation into a charge separation. This subunit is found at the monomer-monomer interface. In Synechococcus elongatus (strain ATCC 33912 / PCC 7942 / FACHB-805) (Anacystis nidulans R2), this protein is Photosystem II reaction center protein M.